A 534-amino-acid polypeptide reads, in one-letter code: Glucans biosynthesis protein D (534 aa).

Residues 1–26 (MQRRDFIRNASLALAAFGLPSLPACA) constitute a signal peptide (tat-type signal).

It belongs to the OpgD/OpgG family. In terms of processing, predicted to be exported by the Tat system. The position of the signal peptide cleavage has not been experimentally proven.

It localises to the periplasm. The protein operates within glycan metabolism; osmoregulated periplasmic glucan (OPG) biosynthesis. Probably involved in the control of the structural glucose backbone of osmoregulated periplasmic glucans (OPGs). The chain is Glucans biosynthesis protein D from Stenotrophomonas maltophilia (strain R551-3).